The primary structure comprises 645 residues: MSLSANISVEAPIENQIQEIAYDGTEIYQLPPTLSEHLAKCATKIDFSKTSSDIDLLQQSIKKEDEKKEEESKDPKEQFQSSLWPWDSVRNKLKEALTEVCVLSDVLNIAKEKRYMVLDPIPQEPPEVKQMVLVYARKKALASAANILQSGVERLKAVQSDQGVSRSNSTDFHIELLRLRRNWRLKKVSNTIIGDLSYRTAGSKFMHPGMFEVTKAEDEESGSPPASPSGSGAAGTVACPKINSALRVNVPTELQGVAFIKVITQKDQEDLCTATVNMMGSTQLVPQAGAWQQTLEYAQNVLFCKELFNQLAREAVQLQAPIPHVVVGNQIRATLLPGIQLIISLCHSTSSDSNNSSEPIKDHDHVLEHSLHQLLREFHHKNTHHPFPHPASGPLGPSKKRMLAGPSAYDRHELLEMTKSQTLLEQIIAQAQHIFTRRRTQYVLDTVARDVKDPMITSHWNAMNSPTMSCVKINITSHGYDANLRTSLVIHVKERSLKCICRDGRIMHMSYEPQELRDLILCQISQHQIVCLQNLAKCMAWQILSSSSHLGIGSVEPLGNASSCVLASPNSDRLIAVQVRCDSQIDVKVFIAQSPAKDFFPGSLVQGRHWEHLGGHFKEVRFDKMEGKNFHNKMEFLMASLTSQS.

Residues 215 to 234 (KAEDEESGSPPASPSGSGAA) are disordered. Residues 222–234 (GSPPASPSGSGAA) are compositionally biased toward low complexity.

The protein belongs to the Mediator complex subunit 17 family. Component of the Mediator complex.

The protein resides in the nucleus. In terms of biological role, component of the Mediator complex, a coactivator involved in the regulated transcription of nearly all RNA polymerase II-dependent genes. Mediator functions as a bridge to convey information from gene-specific regulatory proteins to the basal RNA polymerase II transcription machinery. Mediator is recruited to promoters by direct interactions with regulatory proteins and serves as a scaffold for the assembly of a functional preinitiation complex with RNA polymerase II and the general transcription factors. The polypeptide is Mediator of RNA polymerase II transcription subunit 17 (MED17) (Anopheles gambiae (African malaria mosquito)).